The chain runs to 319 residues: L-lactate dehydrogenase 2 (319 aa).

NAD(+) is bound by residues V16, D37, K42, Y68, and 82 to 83 (GA). Substrate-binding residues include Q85 and R91. NAD(+) contacts are provided by residues S104, 121–123 (AAN), and S146. 123–126 (NPVD) is a substrate binding site. 151 to 154 (DSAR) contacts substrate. H178 (proton acceptor) is an active-site residue. Y222 carries the phosphotyrosine modification. T231 serves as a coordination point for substrate.

The protein belongs to the LDH/MDH superfamily. LDH family. In terms of assembly, homotetramer.

It is found in the cytoplasm. It carries out the reaction (S)-lactate + NAD(+) = pyruvate + NADH + H(+). It functions in the pathway fermentation; pyruvate fermentation to lactate; (S)-lactate from pyruvate: step 1/1. Catalyzes the conversion of lactate to pyruvate (Potential). Contributes to S.aureus growth during nitrosative stress in both aerobically and anaerobically cultured cells, despite playing a secondary role in this resistance mechanism. The polypeptide is L-lactate dehydrogenase 2 (Staphylococcus aureus (strain Mu3 / ATCC 700698)).